A 473-amino-acid chain; its full sequence is LEC14B protein (473 aa).

5 WD repeats span residues 212 to 242 (GYSF…CVYD), 254 to 285 (AHES…KVWD), 301 to 331 (GHLE…KLWD), 377 to 413 (GHSV…YIYD), and 425 to 455 (YHKA…VKWE).

The protein belongs to the WD repeat LEC14B family.

This chain is LEC14B protein, found in Lithospermum erythrorhizon (Purple gromwell).